Reading from the N-terminus, the 474-residue chain is Aspartyl/glutamyl-tRNA(Asn/Gln) amidotransferase subunit B (474 aa).

It belongs to the GatB/GatE family. GatB subfamily. As to quaternary structure, heterotrimer of A, B and C subunits.

It carries out the reaction L-glutamyl-tRNA(Gln) + L-glutamine + ATP + H2O = L-glutaminyl-tRNA(Gln) + L-glutamate + ADP + phosphate + H(+). The enzyme catalyses L-aspartyl-tRNA(Asn) + L-glutamine + ATP + H2O = L-asparaginyl-tRNA(Asn) + L-glutamate + ADP + phosphate + 2 H(+). Functionally, allows the formation of correctly charged Asn-tRNA(Asn) or Gln-tRNA(Gln) through the transamidation of misacylated Asp-tRNA(Asn) or Glu-tRNA(Gln) in organisms which lack either or both of asparaginyl-tRNA or glutaminyl-tRNA synthetases. The reaction takes place in the presence of glutamine and ATP through an activated phospho-Asp-tRNA(Asn) or phospho-Glu-tRNA(Gln). This Methanospirillum hungatei JF-1 (strain ATCC 27890 / DSM 864 / NBRC 100397 / JF-1) protein is Aspartyl/glutamyl-tRNA(Asn/Gln) amidotransferase subunit B.